A 481-amino-acid polypeptide reads, in one-letter code: Glutamyl-tRNA(Gln) amidotransferase subunit A (481 aa).

Residues K74 and S149 each act as charge relay system in the active site. Catalysis depends on S173, which acts as the Acyl-ester intermediate.

The protein belongs to the amidase family. GatA subfamily. As to quaternary structure, heterotrimer of A, B and C subunits.

The catalysed reaction is L-glutamyl-tRNA(Gln) + L-glutamine + ATP + H2O = L-glutaminyl-tRNA(Gln) + L-glutamate + ADP + phosphate + H(+). Allows the formation of correctly charged Gln-tRNA(Gln) through the transamidation of misacylated Glu-tRNA(Gln) in organisms which lack glutaminyl-tRNA synthetase. The reaction takes place in the presence of glutamine and ATP through an activated gamma-phospho-Glu-tRNA(Gln). The protein is Glutamyl-tRNA(Gln) amidotransferase subunit A of Francisella tularensis subsp. novicida (strain U112).